Consider the following 154-residue polypeptide: C-type lectin 16 (154 aa).

The first 20 residues, 1-20, serve as a signal peptide directing secretion; it reads MALSLYLIAVICSLVGFTAS. The C-type lectin domain maps to 27 to 152; that stretch reads DNRFCFPNVV…CASMRRFVCE (126 aa). 2 disulfides stabilise this stretch: Cys-46–Cys-151 and Cys-123–Cys-143.

As to quaternary structure, (Microbial infection) Interacts with non-structural protein 1 of dengue virus type 2. Interacts with envelope protein E of dengue virus type 2. Female salivary gland (at protein level). Not detected in female carcass without salivary glands (at protein level). Not detected in male tissues (at protein level).

It is found in the secreted. Its function is as follows. Putative lectin. May have a regulatory role in mosquito immunity. Probably suppresses replication of dengue virus type 2 in mosquito salivary glands. This is C-type lectin 16 from Aedes aegypti (Yellowfever mosquito).